We begin with the raw amino-acid sequence, 540 residues long: MTTSLQDGQSAAGRAAARDSPLAAQVCGAAQGRGDARDLAPAPWLHARALLPPPDATRGCAADRRKKKDLDVLEMPSIPNPFPELCCSPFTSVLSAGLFPKANSRKKQVIKVYSEDETSRALEVPSDITARDVCQLLILKNHYIDDHSWTLFEHLPHVGLERTIEDHELVIEVLSNWGMEEENKLYFRKNYAKYEFFKNPMYFFPEHMVSFATETNGEISPTQILQMFLSSSTYPEIHGFLHAKEQGKKSWKKIYFLLRRSGLYFSTKGTSKEPRHLQFFSEFGNSDIYVSLAGKKKHGAPTNYGFCFKPNKAGGPRDLKMLCAEEEQSRTCWVTAIRLLKYGMQLYQNYMHPYQGRSGYSSQSISPMRSISENSRVAMDFSGQKTRVIENPTEALSVAVEEGLAWRKKGCLRLGSHGSPTASSQSSATSMAIHRSQPWFHHKMSREEAQRLIIQQGLVDGVFLVRDSQSNPKTFVLSMSHGQKIKHFQIIPVEDDGEMFHTLDDGHTRFTDLIQLVEFYQLNKGVLPCKLKHYCARIAL.

The interval 1–23 is disordered; the sequence is MTTSLQDGQSAAGRAAARDSPLA. Thr-2 bears the N-acetylthreonine mark. In terms of domain architecture, Ras-associating spans 106–192; sequence KKQVIKVYSE…NKLYFRKNYA (87 aa). A PH domain is found at 234 to 342; that stretch reads YPEIHGFLHA…WVTAIRLLKY (109 aa). Phosphoserine is present on residues Ser-372 and Ser-375. One can recognise an SH2 domain in the interval 439 to 535; it reads WFHHKMSREE…VLPCKLKHYC (97 aa).

This sequence belongs to the GRB7/10/14 family. In terms of assembly, interacts with the cytoplasmic domain of the autophosphorylated insulin receptor, through the SH2 domain. Interacts with GRB14 (via BPS domain); this interaction protects the tyrosines in the activation loop on INSR from dephosphorylation. Binds to the ankyrin repeat region of TNKS2 via its N-terminus. Interacts with activated NRAS. Interacts (via SH2 domain) with TEK/TIE2 (tyrosine phosphorylated). In terms of processing, phosphorylated on serine residues. Phosphorylated on tyrosine residues by TEK/TIE2.

The protein resides in the cytoplasm. It localises to the endosome membrane. Functionally, adapter protein which modulates coupling of cell surface receptor kinases with specific signaling pathways. Binds to, and suppresses signals from, the activated insulin receptor (INSR). Potent inhibitor of insulin-stimulated MAPK3 phosphorylation. Plays a critical role regulating PDPK1 membrane translocation in response to insulin stimulation and serves as an adapter protein to recruit PDPK1 to activated insulin receptor, thus promoting PKB/AKT1 phosphorylation and transduction of the insulin signal. This chain is Growth factor receptor-bound protein 14 (GRB14), found in Bos taurus (Bovine).